Here is a 148-residue protein sequence, read N- to C-terminus: Snaclec 4 (148 aa).

A signal peptide spans Met-1 to Ala-23. In terms of domain architecture, C-type lectin spans Tyr-34–Gly-148.

Belongs to the snaclec family. In terms of assembly, heterodimer; disulfide-linked. In terms of processing, contains disulfide bonds. In terms of tissue distribution, expressed by the venom gland.

It localises to the secreted. Interferes with one step of hemostasis (modulation of platelet aggregation, or coagulation cascade, for example). This chain is Snaclec 4, found in Echis pyramidum leakeyi (Leakey's carpet viper).